The chain runs to 226 residues: Ribonuclease 3 (226 aa).

Residues 6-128 enclose the RNase III domain; sequence INRLQRKLGY…LIGGVFLDSN (123 aa). Residue Glu41 coordinates Mg(2+). Asp45 is an active-site residue. 2 residues coordinate Mg(2+): Asp114 and Glu117. Residue Glu117 is part of the active site. The region spanning 155 to 225 is the DRBM domain; that stretch reads DPKTRLQEYL…AEQVLKKLEL (71 aa).

It belongs to the ribonuclease III family. As to quaternary structure, homodimer. The cofactor is Mg(2+).

The protein localises to the cytoplasm. It carries out the reaction Endonucleolytic cleavage to 5'-phosphomonoester.. In terms of biological role, digests double-stranded RNA. Involved in the processing of primary rRNA transcript to yield the immediate precursors to the large and small rRNAs (23S and 16S). Processes some mRNAs, and tRNAs when they are encoded in the rRNA operon. Processes pre-crRNA and tracrRNA of type II CRISPR loci if present in the organism. This Salmonella choleraesuis (strain SC-B67) protein is Ribonuclease 3.